Consider the following 127-residue polypeptide: Large ribosomal subunit protein bL17 (127 aa).

It belongs to the bacterial ribosomal protein bL17 family. Part of the 50S ribosomal subunit. Contacts protein L32.

This Pelobacter propionicus (strain DSM 2379 / NBRC 103807 / OttBd1) protein is Large ribosomal subunit protein bL17.